We begin with the raw amino-acid sequence, 325 residues long: Beta-ketoacyl-[acyl-carrier-protein] synthase III (325 aa).

Active-site residues include Cys-114 and His-252. The segment at 253-257 (QANFR) is ACP-binding. Asn-282 is an active-site residue.

The protein belongs to the thiolase-like superfamily. FabH family. Homodimer.

Its subcellular location is the cytoplasm. The enzyme catalyses malonyl-[ACP] + acetyl-CoA + H(+) = 3-oxobutanoyl-[ACP] + CO2 + CoA. It functions in the pathway lipid metabolism; fatty acid biosynthesis. In terms of biological role, catalyzes the condensation reaction of fatty acid synthesis by the addition to an acyl acceptor of two carbons from malonyl-ACP. Catalyzes the first condensation reaction which initiates fatty acid synthesis and may therefore play a role in governing the total rate of fatty acid production. Possesses both acetoacetyl-ACP synthase and acetyl transacylase activities. Its substrate specificity determines the biosynthesis of branched-chain and/or straight-chain of fatty acids. The polypeptide is Beta-ketoacyl-[acyl-carrier-protein] synthase III (Novosphingobium aromaticivorans (strain ATCC 700278 / DSM 12444 / CCUG 56034 / CIP 105152 / NBRC 16084 / F199)).